The sequence spans 599 residues: Proline--tRNA ligase (599 aa).

Belongs to the class-II aminoacyl-tRNA synthetase family. ProS type 1 subfamily. In terms of assembly, homodimer.

It is found in the cytoplasm. It carries out the reaction tRNA(Pro) + L-proline + ATP = L-prolyl-tRNA(Pro) + AMP + diphosphate. Catalyzes the attachment of proline to tRNA(Pro) in a two-step reaction: proline is first activated by ATP to form Pro-AMP and then transferred to the acceptor end of tRNA(Pro). As ProRS can inadvertently accommodate and process non-cognate amino acids such as alanine and cysteine, to avoid such errors it has two additional distinct editing activities against alanine. One activity is designated as 'pretransfer' editing and involves the tRNA(Pro)-independent hydrolysis of activated Ala-AMP. The other activity is designated 'posttransfer' editing and involves deacylation of mischarged Ala-tRNA(Pro). The misacylated Cys-tRNA(Pro) is not edited by ProRS. This chain is Proline--tRNA ligase, found in Prochlorococcus marinus (strain MIT 9303).